A 179-amino-acid chain; its full sequence is Adenine phosphoribosyltransferase (179 aa).

Belongs to the purine/pyrimidine phosphoribosyltransferase family. As to quaternary structure, homodimer.

It is found in the cytoplasm. The catalysed reaction is AMP + diphosphate = 5-phospho-alpha-D-ribose 1-diphosphate + adenine. The protein operates within purine metabolism; AMP biosynthesis via salvage pathway; AMP from adenine: step 1/1. In terms of biological role, catalyzes a salvage reaction resulting in the formation of AMP, that is energically less costly than de novo synthesis. The protein is Adenine phosphoribosyltransferase of Ruegeria pomeroyi (strain ATCC 700808 / DSM 15171 / DSS-3) (Silicibacter pomeroyi).